The primary structure comprises 67 residues: Putative sodium channel alpha-toxin Acra7 (67 aa).

The 65-residue stretch at 2–66 (RDGYIVKPTN…PIKDPNQDCT (65 aa)) folds into the LCN-type CS-alpha/beta domain. Intrachain disulfides connect Cys12–Cys65, Cys16–Cys37, Cys23–Cys47, and Cys27–Cys49. Residue Arg67 is a propeptide, removed by a carboxypeptidase.

It belongs to the long (4 C-C) scorpion toxin superfamily. Sodium channel inhibitor family. Alpha subfamily. As to expression, expressed by the venom gland.

The protein localises to the secreted. Functionally, alpha toxins bind voltage-independently at site-3 of sodium channels (Nav) and inhibit the inactivation of the activated channels, thereby blocking neuronal transmission. The protein is Putative sodium channel alpha-toxin Acra7 of Androctonus crassicauda (Arabian fat-tailed scorpion).